The primary structure comprises 217 residues: UPF0173 metal-dependent hydrolase MJ1163 (217 aa).

The protein belongs to the UPF0173 family.

This is UPF0173 metal-dependent hydrolase MJ1163 from Methanocaldococcus jannaschii (strain ATCC 43067 / DSM 2661 / JAL-1 / JCM 10045 / NBRC 100440) (Methanococcus jannaschii).